The following is a 123-amino-acid chain: Small ribosomal subunit protein uS13 (123 aa).

Positions 97–123 (PVRGQRTHTNAKTRKGRSKLPVAAKKK) are disordered.

The protein belongs to the universal ribosomal protein uS13 family. Part of the 30S ribosomal subunit. Forms a loose heterodimer with protein S19. Forms two bridges to the 50S subunit in the 70S ribosome.

Located at the top of the head of the 30S subunit, it contacts several helices of the 16S rRNA. In the 70S ribosome it contacts the 23S rRNA (bridge B1a) and protein L5 of the 50S subunit (bridge B1b), connecting the 2 subunits; these bridges are implicated in subunit movement. Contacts the tRNAs in the A and P-sites. The sequence is that of Small ribosomal subunit protein uS13 from Ehrlichia canis (strain Jake).